Consider the following 396-residue polypeptide: S-adenosylmethionine synthase 4 (396 aa).

Glutamate 13 is a binding site for Mg(2+). Residue histidine 19 coordinates ATP. Position 47 (glutamate 47) interacts with K(+). Positions 60 and 103 each coordinate L-methionine. ATP is bound by residues 171–173 (DGK), 239–242 (SGRF), aspartate 250, 256–257 (RK), alanine 273, lysine 277, and lysine 281. Position 250 (aspartate 250) interacts with L-methionine. Residue lysine 281 participates in L-methionine binding.

The protein belongs to the AdoMet synthase family. In terms of assembly, homotetramer. Mn(2+) serves as cofactor. Requires Mg(2+) as cofactor. Co(2+) is required as a cofactor. It depends on K(+) as a cofactor. In terms of tissue distribution, expressed in roots, stems and leaves (at protein level).

The protein localises to the cytoplasm. It carries out the reaction L-methionine + ATP + H2O = S-adenosyl-L-methionine + phosphate + diphosphate. It functions in the pathway amino-acid biosynthesis; S-adenosyl-L-methionine biosynthesis; S-adenosyl-L-methionine from L-methionine: step 1/1. In terms of biological role, catalyzes the formation of S-adenosylmethionine from methionine and ATP. The reaction comprises two steps that are both catalyzed by the same enzyme: formation of S-adenosylmethionine (AdoMet) and triphosphate, and subsequent hydrolysis of the triphosphate. May be involved in the synthesis of betain in response to abiotic stress such as high salinity. The chain is S-adenosylmethionine synthase 4 (SAMS4) from Atriplex nummularia (Old man saltbush).